Consider the following 107-residue polypeptide: High mobility group protein HMG-I/HMG-Y (107 aa).

The disordered stretch occupies residues 1-107; sequence MSESSSKSSQ…ISQESSEEEQ (107 aa). Ser2 bears the N-acetylserine mark. The residue at position 7 (Lys7) is an N6-acetyllysine. An ADP-ribosylserine modification is found at Ser8. Ser9 is subject to ADP-ribosylserine; alternate. Position 9 is a phosphoserine; alternate (Ser9). The residue at position 15 (Lys15) is an N6-acetyllysine; alternate. A Glycyl lysine isopeptide (Lys-Gly) (interchain with G-Cter in SUMO2); alternate cross-link involves residue Lys15. Positions 15–24 are enriched in basic and acidic residues; the sequence is KQEKDGTEKR. The a.T hook 1 DNA-binding region spans 21–31; it reads TEKRGRGRPRK. Arg26 carries the post-translational modification Asymmetric dimethylarginine; alternate. An Omega-N-methylarginine; alternate modification is found at Arg26. Arg26 carries the post-translational modification Symmetric dimethylarginine; alternate. Ser36 is subject to Phosphoserine; by HIPK2 and CDC2. A phosphothreonine mark is found at Thr39 and Val42. A phosphoserine mark is found at Ser44 and Ser49. At Thr53 the chain carries Phosphothreonine; by HIPK2 and CDC2. Positions 53–63 form a DNA-binding region, a.T hook 2; it reads TPKRPRGRPKG. An interaction with HIPK2 region spans residues 53-77; sequence TPKRPRGRPKGSKNKGAAKTRKTTT. Over residues 55–74 the composition is skewed to basic residues; sequence KRPRGRPKGSKNKGAAKTRK. An asymmetric dimethylarginine; by PRMT6; alternate mark is found at Arg58 and Arg60. Arg58 and Arg60 each carry omega-N-methylarginine; by PRMT6; alternate. Lys67 carries the phosphothreonine modification. Thr78 is modified (phosphothreonine; by HIPK2 and CDC2). The a.T hook 3 DNA-binding region spans 78-89; the sequence is TPGRKPRGRPKK. Residues 93–107 show a composition bias toward acidic residues; it reads EEEEGISQESSEEEQ. Position 99 is a phosphoserine (Ser99). Phosphoserine; by CK is present on residues Ser102 and Ser103.

It belongs to the HMGA family. In terms of assembly, interacts with HIPK2. In terms of processing, constitutively phosphorylated on two or three sites. Hyperphosphorylated at early stages of apoptosis, followed by dephosphorylation and methylation, which coincides with chromatin condensation. Isoforms HMG-I and HMG-Y can be phosphorylated by HIPK2. Phosphorylation of HMG-I at Ser-36, Thr-53 and Thr-78 and of HMG-Y at Thr-42 and Thr-67 by HIPK2 modulates DNA-binding affinity. HMG-Y is not methylated. Post-translationally, methylation at Arg-58 is mutually exclusive with methylation at Arg-60.

Its subcellular location is the nucleus. It is found in the chromosome. Its function is as follows. HMG-I/Y bind preferentially to the minor groove of A+T rich regions in double-stranded DNA. It is suggested that these proteins could function in nucleosome phasing and in the 3'-end processing of mRNA transcripts. They are also involved in the transcription regulation of genes containing, or in close proximity to A+T-rich regions. In Homo sapiens (Human), this protein is High mobility group protein HMG-I/HMG-Y (HMGA1).